The sequence spans 49 residues: Large ribosomal subunit protein bL33 (49 aa).

It belongs to the bacterial ribosomal protein bL33 family.

The chain is Large ribosomal subunit protein bL33 from Alkaliphilus metalliredigens (strain QYMF).